We begin with the raw amino-acid sequence, 124 residues long: MRGFRPLLSLLLPLSACFPLLDRRGPTDIGDIGARMNWAQLAEGHPPNSVQNPQPQALLVVAREQQASHREHTGFRLGRQDGSSEAAGFLPADSEKASGPLGTLAEELSSYSRRKGGFSFRFGR.

Residues 1 to 17 form the signal peptide; that stretch reads MRGFRPLLSLLLPLSAC. The propeptide occupies 18 to 79; that stretch reads FPLLDRRGPT…REHTGFRLGR (62 aa). Residues 63–101 form a disordered region; that stretch reads REQQASHREHTGFRLGRQDGSSEAAGFLPADSEKASGPL. Phenylalanine 122 is subject to Phenylalanine amide.

This sequence belongs to the RFamide neuropeptide family. As to quaternary structure, ligand for the G-protein coupled receptor QRFPR/GPR103. In terms of tissue distribution, expressed in the brain with highest levels in the periventricular hypothalamic nucleus and lateral hypothalamic areas. Expressed at moderate levels in the adrenal gland, eye, heart, intestine, liver, lung, kidney, mesenteric lymph node, ovary, placenta, Peyer patches, skin, spleen, stomach, testis, thymus and uterus.

It is found in the secreted. In terms of biological role, stimulates feeding and grooming behavior, metabolic rate and locomotor activity and increases blood pressure. May have orexigenic activity. May promote aldosterone secretion by the adrenal gland. The chain is Orexigenic neuropeptide QRFP from Mus musculus (Mouse).